We begin with the raw amino-acid sequence, 196 residues long: Imidazoleglycerol-phosphate dehydratase (196 aa).

The protein belongs to the imidazoleglycerol-phosphate dehydratase family.

The protein localises to the cytoplasm. It catalyses the reaction D-erythro-1-(imidazol-4-yl)glycerol 3-phosphate = 3-(imidazol-4-yl)-2-oxopropyl phosphate + H2O. Its pathway is amino-acid biosynthesis; L-histidine biosynthesis; L-histidine from 5-phospho-alpha-D-ribose 1-diphosphate: step 6/9. This is Imidazoleglycerol-phosphate dehydratase from Moorella thermoacetica (strain ATCC 39073 / JCM 9320).